The chain runs to 335 residues: Tyrosine-protein phosphatase 1 (335 aa).

Positions 15–328 (LLGKFKFIQN…LFIYHAAKYL (314 aa)) constitute a Tyrosine-protein phosphatase domain. A Phosphoserine; by CLK1 modification is found at Ser-83. Cys-252 acts as the Phosphocysteine intermediate in catalysis.

This sequence belongs to the protein-tyrosine phosphatase family. Non-receptor class subfamily. In terms of processing, activated by phosphorylation at Ser-83.

It localises to the cytoplasm. It carries out the reaction O-phospho-L-tyrosyl-[protein] + H2O = L-tyrosyl-[protein] + phosphate. Its function is as follows. Is not required for vegetative growth. In Saccharomyces cerevisiae (strain ATCC 204508 / S288c) (Baker's yeast), this protein is Tyrosine-protein phosphatase 1 (PTP1).